The following is a 192-amino-acid chain: Signal peptidase complex catalytic subunit SEC11C (192 aa).

Over 1 to 28 (MVRAGAVGTHLPTSSLDIFGDLRKMNKR) the chain is Cytoplasmic. The helical; Signal-anchor for type II membrane protein transmembrane segment at 29 to 48 (QLYYQVLNFAMIVSSALMIW) threads the bilayer. Residues 49–192 (KGLIVLTGSE…GAYVLLKRES (144 aa)) lie on the Lumenal side of the membrane. Active-site charge relay system residues include Ser68, His108, and Asp134. A C-terminal short (CTS) helix region spans residues 177–188 (ALLAVMGAYVLL).

It belongs to the peptidase S26B family. As to quaternary structure, component of the signal peptidase complex paralog C (SPC-C) composed of a catalytic subunit SEC11C and three accessory subunits SPCS1, SPCS2 and SPCS3. Within the complex, interacts with SPCS2 and SPCS3. The complex induces a local thinning of the ER membrane which is used to measure the length of the signal peptide (SP) h-region of protein substrates. This ensures the selectivity of the complex towards h-regions shorter than 18-20 amino acids. May undergo processing at the N-terminus.

Its subcellular location is the endoplasmic reticulum membrane. The enzyme catalyses Cleavage of hydrophobic, N-terminal signal or leader sequences from secreted and periplasmic proteins.. Functionally, catalytic component of the signal peptidase complex (SPC) which catalyzes the cleavage of N-terminal signal sequences from nascent proteins as they are translocated into the lumen of the endoplasmic reticulum. Specifically cleaves N-terminal signal peptides that contain a hydrophobic alpha-helix (h-region) shorter than 18-20 amino acids. This Mus musculus (Mouse) protein is Signal peptidase complex catalytic subunit SEC11C (Sec11c).